A 90-amino-acid polypeptide reads, in one-letter code: Small ribosomal subunit protein uS15 (90 aa).

This sequence belongs to the universal ribosomal protein uS15 family. As to quaternary structure, part of the 30S ribosomal subunit. Forms a bridge to the 50S subunit in the 70S ribosome, contacting the 23S rRNA.

In terms of biological role, one of the primary rRNA binding proteins, it binds directly to 16S rRNA where it helps nucleate assembly of the platform of the 30S subunit by binding and bridging several RNA helices of the 16S rRNA. Forms an intersubunit bridge (bridge B4) with the 23S rRNA of the 50S subunit in the ribosome. In Helicobacter pylori (strain Shi470), this protein is Small ribosomal subunit protein uS15.